Consider the following 232-residue polypeptide: Ribose-5-phosphate isomerase A (232 aa).

Residues 31–34, 87–90, and 100–103 contribute to the substrate site; these read TGST, DGAD, and KGGG. Catalysis depends on E109, which acts as the Proton acceptor. Substrate is bound at residue K127.

This sequence belongs to the ribose 5-phosphate isomerase family. As to quaternary structure, homodimer.

The catalysed reaction is aldehydo-D-ribose 5-phosphate = D-ribulose 5-phosphate. The protein operates within carbohydrate degradation; pentose phosphate pathway; D-ribose 5-phosphate from D-ribulose 5-phosphate (non-oxidative stage): step 1/1. Functionally, catalyzes the reversible conversion of ribose-5-phosphate to ribulose 5-phosphate. In Bifidobacterium longum subsp. infantis (strain ATCC 15697 / DSM 20088 / JCM 1222 / NCTC 11817 / S12), this protein is Ribose-5-phosphate isomerase A.